The following is a 222-amino-acid chain: Probable transaldolase (222 aa).

The Schiff-base intermediate with substrate role is filled by lysine 83.

The protein belongs to the transaldolase family. Type 3B subfamily.

It is found in the cytoplasm. The enzyme catalyses D-sedoheptulose 7-phosphate + D-glyceraldehyde 3-phosphate = D-erythrose 4-phosphate + beta-D-fructose 6-phosphate. The protein operates within carbohydrate degradation; pentose phosphate pathway; D-glyceraldehyde 3-phosphate and beta-D-fructose 6-phosphate from D-ribose 5-phosphate and D-xylulose 5-phosphate (non-oxidative stage): step 2/3. Its function is as follows. Transaldolase is important for the balance of metabolites in the pentose-phosphate pathway. The chain is Probable transaldolase from Nitrosopumilus maritimus (strain SCM1).